Reading from the N-terminus, the 419-residue chain is D-inositol 3-phosphate glycosyltransferase (419 aa).

A 1D-myo-inositol 3-phosphate-binding site is contributed by His-9. UDP-N-acetyl-alpha-D-glucosamine contacts are provided by residues Gln-15–Pro-16 and Gly-23. Residues Asp-20–Asn-25, Lys-78, Tyr-110, Thr-134, and Arg-154 contribute to the 1D-myo-inositol 3-phosphate site. UDP-N-acetyl-alpha-D-glucosamine-binding residues include Arg-231, Lys-236, and Arg-295. Positions 304, 305, and 307 each coordinate Mg(2+). UDP-N-acetyl-alpha-D-glucosamine contacts are provided by Glu-317 and Glu-325. Mg(2+) is bound at residue Thr-331.

The protein belongs to the glycosyltransferase group 1 family. MshA subfamily. In terms of assembly, homodimer.

It catalyses the reaction 1D-myo-inositol 3-phosphate + UDP-N-acetyl-alpha-D-glucosamine = 1D-myo-inositol 2-acetamido-2-deoxy-alpha-D-glucopyranoside 3-phosphate + UDP + H(+). In terms of biological role, catalyzes the transfer of a N-acetyl-glucosamine moiety to 1D-myo-inositol 3-phosphate to produce 1D-myo-inositol 2-acetamido-2-deoxy-glucopyranoside 3-phosphate in the mycothiol biosynthesis pathway. The protein is D-inositol 3-phosphate glycosyltransferase of Corynebacterium jeikeium (strain K411).